Here is a 293-residue protein sequence, read N- to C-terminus: MTRQKATLIGLIAIVLWSTMVGLIRGVSEGLGPVGGAAAIYSLSGLLLIFTVGFPRIRQIPKGYLLAGSLLFVSYEICLALSLGYAATHHQAIEVGMVNYLWPSLTILFAILFNGQKTNWLIVPGLLLALVGVCWVLGGDNGLHYDEIINNITTSPLSYFLAFIGAFIWAAYCTVTNKYARGFNGITVFVLLTGASLWVYYFLTPQPEMIFSTPVMIKLISAAFTLGFAYAAWNVGILHGNVTIMAVGSYFTPVLSSALAAVLLSAPLSFSFWQGALMVCGGSLLCWLATRRG.

The Cytoplasmic portion of the chain corresponds to 1-6 (MTRQKA). Residues 6 to 137 (ATLIGLIAIV…LALVGVCWVL (132 aa)) enclose the EamA 1 domain. Residues 7–27 (TLIGLIAIVLWSTMVGLIRGV) form a helical membrane-spanning segment. Residues 28–33 (SEGLGP) are Periplasmic-facing. A helical transmembrane segment spans residues 34–54 (VGGAAAIYSLSGLLLIFTVGF). Topologically, residues 55 to 62 (PRIRQIPK) are cytoplasmic. The helical transmembrane segment at 63–83 (GYLLAGSLLFVSYEICLALSL) threads the bilayer. The Periplasmic portion of the chain corresponds to 84-92 (GYAATHHQA). Residues 93–113 (IEVGMVNYLWPSLTILFAILF) form a helical membrane-spanning segment. Topologically, residues 114 to 118 (NGQKT) are cytoplasmic. The chain crosses the membrane as a helical span at residues 119–139 (NWLIVPGLLLALVGVCWVLGG). Residues 140–155 (DNGLHYDEIINNITTS) lie on the Periplasmic side of the membrane. A helical membrane pass occupies residues 156–176 (PLSYFLAFIGAFIWAAYCTVT). One can recognise an EamA 2 domain in the interval 158–285 (SYFLAFIGAF…ALMVCGGSLL (128 aa)). Topologically, residues 177-182 (NKYARG) are cytoplasmic. Residues 183–203 (FNGITVFVLLTGASLWVYYFL) traverse the membrane as a helical segment. Residues 204–218 (TPQPEMIFSTPVMIK) are Periplasmic-facing. A helical membrane pass occupies residues 219–239 (LISAAFTLGFAYAAWNVGILH). At 240–243 (GNVT) the chain is on the cytoplasmic side. A helical membrane pass occupies residues 244-264 (IMAVGSYFTPVLSSALAAVLL). Residues 265 to 267 (SAP) are Periplasmic-facing. The chain crosses the membrane as a helical span at residues 268–288 (LSFSFWQGALMVCGGSLLCWL). Residues 289–293 (ATRRG) are Cytoplasmic-facing.

Belongs to the drug/metabolite transporter (DMT) superfamily. Aromatic amino acid/paraquat exporter (ArAA/P-E) (TC 2.A.7.17) family.

It localises to the cell inner membrane. The enzyme catalyses L-phenylalanine(in) = L-phenylalanine(out). It carries out the reaction L-tyrosine(in) = L-tyrosine(out). It catalyses the reaction L-tryptophan(in) = L-tryptophan(out). The catalysed reaction is L-threonine(in) = L-threonine(out). The enzyme catalyses L-methionine(in) = L-methionine(out). It carries out the reaction L-lysine(in) = L-lysine(out). It catalyses the reaction L-glutamate(out) = L-glutamate(in). The catalysed reaction is L-valine(in) = L-valine(out). The enzyme catalyses L-isoleucine(in) = L-isoleucine(out). Its function is as follows. Amino acid transporter with broad substrate specificity. Can transport various amino acids, including phenylalanine, tyrosine, tryptophan, L-threonine, L-methionine, L-lysine, L-glutamate, L-valine and L-isoleucine. Overexpression confers resistance to phenylalanine and increases export of phenylalanine, tyrosine and tryptophan. This is Aromatic amino acid exporter YddG (yddG) from Escherichia coli (strain K12).